A 585-amino-acid chain; its full sequence is Arginine--tRNA ligase (585 aa).

A 'HIGH' region motif is present at residues Ala131–His141.

It belongs to the class-I aminoacyl-tRNA synthetase family. As to quaternary structure, monomer.

The protein resides in the cytoplasm. It catalyses the reaction tRNA(Arg) + L-arginine + ATP = L-arginyl-tRNA(Arg) + AMP + diphosphate. In Rhizobium etli (strain CIAT 652), this protein is Arginine--tRNA ligase.